The chain runs to 677 residues: Methionine--tRNA ligase (677 aa).

The 'HIGH' region signature appears at proline 15–histidine 25. Zn(2+)-binding residues include cysteine 146, cysteine 149, cysteine 159, and cysteine 162. Positions lysine 333–serine 337 match the 'KMSKS' region motif. Lysine 336 contacts ATP. Residues aspartate 575–lysine 677 form the tRNA-binding domain.

The protein belongs to the class-I aminoacyl-tRNA synthetase family. MetG type 1 subfamily. Homodimer. It depends on Zn(2+) as a cofactor.

The protein resides in the cytoplasm. The catalysed reaction is tRNA(Met) + L-methionine + ATP = L-methionyl-tRNA(Met) + AMP + diphosphate. Is required not only for elongation of protein synthesis but also for the initiation of all mRNA translation through initiator tRNA(fMet) aminoacylation. The chain is Methionine--tRNA ligase from Shigella boydii serotype 18 (strain CDC 3083-94 / BS512).